The primary structure comprises 726 residues: Beta-glucosidase cel3A (726 aa).

Residues 1–20 (MASRLVAGLQVLALAGTATA) form the signal peptide. 2 N-linked (GlcNAc...) asparagine glycosylation sites follow: N223 and N592.

Belongs to the glycosyl hydrolase 3 family.

The protein localises to the secreted. It catalyses the reaction Hydrolysis of terminal, non-reducing beta-D-glucosyl residues with release of beta-D-glucose.. The protein operates within glycan metabolism; cellulose degradation. In terms of biological role, beta-glucosidases are one of a number of cellulolytic enzymes involved in the degradation of cellulosic biomass. Catalyzes the last step releasing glucose from the inhibitory cellobiose. Has a broad substrate specificity but preferentially hydrolyzes highly polymerized 1,3- and 1,4-beta-glucans. The sequence is that of Beta-glucosidase cel3A from Pyricularia oryzae (strain 70-15 / ATCC MYA-4617 / FGSC 8958) (Rice blast fungus).